The following is a 511-amino-acid chain: 2-isopropylmalate synthase (511 aa).

Residues 6–269 (IIIFDTTLRD…YTDIKCENIF (264 aa)) form the Pyruvate carboxyltransferase domain. Asp15, His203, His205, and Asn239 together coordinate Mn(2+). Residues 394 to 511 (VLEKLSVISG…SLKVEERKMA (118 aa)) are regulatory domain.

It belongs to the alpha-IPM synthase/homocitrate synthase family. LeuA type 1 subfamily. In terms of assembly, homodimer. The cofactor is Mn(2+).

It localises to the cytoplasm. The catalysed reaction is 3-methyl-2-oxobutanoate + acetyl-CoA + H2O = (2S)-2-isopropylmalate + CoA + H(+). It functions in the pathway amino-acid biosynthesis; L-leucine biosynthesis; L-leucine from 3-methyl-2-oxobutanoate: step 1/4. In terms of biological role, catalyzes the condensation of the acetyl group of acetyl-CoA with 3-methyl-2-oxobutanoate (2-ketoisovalerate) to form 3-carboxy-3-hydroxy-4-methylpentanoate (2-isopropylmalate). This Campylobacter jejuni subsp. jejuni serotype O:2 (strain ATCC 700819 / NCTC 11168) protein is 2-isopropylmalate synthase.